Reading from the N-terminus, the 364-residue chain is DNA replication and repair protein RecF (364 aa).

30 to 37 (GNNAQGKT) is a binding site for ATP.

This sequence belongs to the RecF family.

The protein resides in the cytoplasm. In terms of biological role, the RecF protein is involved in DNA metabolism; it is required for DNA replication and normal SOS inducibility. RecF binds preferentially to single-stranded, linear DNA. It also seems to bind ATP. The polypeptide is DNA replication and repair protein RecF (Streptococcus uberis (strain ATCC BAA-854 / 0140J)).